Consider the following 333-residue polypeptide: CMP-N-acetylneuraminate-beta-galactosamide-alpha-2,3-sialyltransferase 4 (333 aa).

At 1–8 (MVSKSRWK) the chain is on the cytoplasmic side. Residues 9–26 (LLAMLALVLVVMVWYSIS) traverse the membrane as a helical; Signal-anchor for type II membrane protein segment. Residues 27–333 (REDRYIELFY…MGAIKNLTSF (307 aa)) are Lumenal-facing. Residues Asn61, Asn131, Asn310, and Asn329 are each glycosylated (N-linked (GlcNAc...) asparagine). Cys120 and Cys273 form a disulfide bridge.

Belongs to the glycosyltransferase 29 family. The soluble form derives from the membrane form by proteolytic processing. In terms of tissue distribution, highly expressed in adult placenta, heart and kidney.

It localises to the golgi apparatus. It is found in the golgi stack membrane. The protein localises to the secreted. It catalyses the reaction a beta-D-galactosyl-(1-&gt;3)-N-acetyl-beta-D-galactosaminyl derivative + CMP-N-acetyl-beta-neuraminate = an N-acetyl-alpha-neuraminyl-(2-&gt;3)-beta-D-galactosyl-(1-&gt;3)-N-acetyl-beta-D-galactosaminyl derivative + CMP + H(+). The enzyme catalyses a beta-D-galactosyl-(1-&gt;3)-N-acetyl-alpha-D-galactosaminyl derivative + CMP-N-acetyl-beta-neuraminate = an N-acetyl-alpha-neuraminyl-(2-&gt;3)-beta-D-galactosyl-(1-&gt;3)-N-acetyl-alpha-D-galactosaminyl derivative + CMP + H(+). It carries out the reaction a beta-D-galactosyl-(1-&gt;4)-N-acetyl-beta-D-glucosaminyl derivative + CMP-N-acetyl-beta-neuraminate = an N-acetyl-alpha-neuraminyl-(2-&gt;3)-beta-D-galactosyl-(1-&gt;4)-N-acetyl-beta-D-glucosaminyl derivative + CMP + H(+). The catalysed reaction is a ganglioside GM1 (d18:1(4E)) + CMP-N-acetyl-beta-neuraminate = a ganglioside GD1a (d18:1(4E)) + CMP + H(+). It catalyses the reaction a ganglioside GA1 (d18:1(4E)) + CMP-N-acetyl-beta-neuraminate = a ganglioside GM1b (d18:1(4E)) + CMP + H(+). The enzyme catalyses a ganglioside GT1c (d18:1(4E)) + CMP-N-acetyl-beta-neuraminate = a ganglioside GQ1c (d18:1(4E)) + CMP + H(+). It carries out the reaction a neolactoside nLc4Cer + CMP-N-acetyl-beta-neuraminate = a neolactoside IV(3)-alpha-NeuAc-nLc4Cer + CMP + H(+). The catalysed reaction is a neolactoside nLc4Cer(d18:1(4E)) + CMP-N-acetyl-beta-neuraminate = a neolactoside IV(3)-alpha-NeuAc-nLc4Cer(d18:1(4E)) + CMP + H(+). It functions in the pathway protein modification; protein glycosylation. Its pathway is glycolipid biosynthesis. Functionally, a beta-galactoside alpha2-3 sialyltransferase involved in terminal sialylation of glycoproteins and glycolipids. Catalyzes the transfer of sialic acid (N-acetyl-neuraminic acid; Neu5Ac) from the nucleotide sugar donor CMP-Neu5Ac onto acceptor Galbeta-(1-&gt;3)-GalNAc- and Galbeta-(1-&gt;4)-GlcNAc-terminated glycoconjugates through an alpha2-3 linkage. Plays a major role in hemostasis. Responsible for sialylation of plasma VWF/von Willebrand factor, preventing its recognition by asialoglycoprotein receptors (ASGPR) and subsequent clearance. Regulates ASGPR-mediated clearance of platelets. Participates in the biosynthesis of the sialyl Lewis X epitopes, both on O- and N-glycans, which are recognized by SELE/E-selectin, SELP/P-selectin and SELL/L-selectin. Essential for selectin-mediated rolling and adhesion of leukocytes during extravasation. Contributes to adhesion and transendothelial migration of neutrophils likely through terminal sialylation of CXCR2. In glycosphingolipid biosynthesis, sialylates GM1 and GA1 gangliosides to form GD1a and GM1b, respectively. Metabolizes brain c-series ganglioside GT1c forming GQ1c. Synthesizes ganglioside LM1 (IV3Neu5Ac-nLc4Cer), a major structural component of peripheral nerve myelin. The chain is CMP-N-acetylneuraminate-beta-galactosamide-alpha-2,3-sialyltransferase 4 (ST3GAL4) from Homo sapiens (Human).